Here is a 217-residue protein sequence, read N- to C-terminus: Tegument protein BKRF4 (217 aa).

The tract at residues 1–217 (MAMFLKSRGV…GNNNYNWPWL (217 aa)) is disordered. Polar residues predominate over residues 32-42 (YTLGSQASQSI). A compositionally biased stretch (acidic residues) spans 43 to 79 (QEEDVSDTDESDYSDEDEEIDLEEEYPSDEDPSEGSD). The interval 63 to 64 (DL) is interaction with host histones H3/H4. The tract at residues 81-84 (DPSW) is interaction with host H2A/H2B. The segment covering 89 to 102 (SDESDYSESDEDEA) has biased composition (acidic residues). Positions 106 to 132 (SQASRSSRVSPSTQQSSGLTPTPSFSR) are enriched in low complexity. Residues 136–145 (RAPPRPPAPA) are compositionally biased toward pro residues. A compositionally biased stretch (polar residues) spans 208–217 (GNNNYNWPWL).

The protein belongs to the lymphocryptovirus BKRF4 family. In terms of assembly, forms a complex with the host H3/H4 dimer and histone chaperone ASF1. Also forms a complex with host H2A/H2B dimer. Interacts (via C-terminus) with BGLF2; this interaction is important for infectious virion production.

The protein localises to the virion tegument. It localises to the host nucleus. Its subcellular location is the host cytoplasm. It is found in the host perinuclear region. In terms of biological role, histone-binding protein that binds to histones H2A/H2B, H3/H4 and cellular chromatin to overcome the host DNA damage response triggered by the viral genome ends. Interferes with histone ubiquitination and recruitment of repair proteins. This chain is Tegument protein BKRF4, found in Epstein-Barr virus (strain GD1) (HHV-4).